Here is an 865-residue protein sequence, read N- to C-terminus: Eukaryotic translation initiation factor 3 subunit C (865 aa).

Disordered regions lie at residues M1–K92 and E206–G243. Acidic residues-rich tracts occupy residues S16–A54 and D69–A80. The segment covering V82–K92 has biased composition (basic and acidic residues). Residues A226 to E235 show a composition bias toward acidic residues. Residues F606 to E780 enclose the PCI domain. The interval S801–A865 is disordered. Residues Q808–F817 show a composition bias toward polar residues. The segment covering G822–F841 has biased composition (gly residues).

It belongs to the eIF-3 subunit C family. As to quaternary structure, component of the eukaryotic translation initiation factor 3 (eIF-3) complex.

It is found in the cytoplasm. Its function is as follows. Component of the eukaryotic translation initiation factor 3 (eIF-3) complex, which is involved in protein synthesis of a specialized repertoire of mRNAs and, together with other initiation factors, stimulates binding of mRNA and methionyl-tRNAi to the 40S ribosome. The eIF-3 complex specifically targets and initiates translation of a subset of mRNAs involved in cell proliferation. The chain is Eukaryotic translation initiation factor 3 subunit C from Pyricularia oryzae (strain 70-15 / ATCC MYA-4617 / FGSC 8958) (Rice blast fungus).